Here is a 412-residue protein sequence, read N- to C-terminus: L-threonine:uridine-5'-aldehyde transaldolase (412 aa).

At lysine 229 the chain carries N6-(pyridoxal phosphate)lysine.

The protein belongs to the SHMT family. The cofactor is pyridoxal 5'-phosphate.

It carries out the reaction uridine-5'-aldehyde + L-threonine = (5'S,6'S)-C-glycyluridine + acetaldehyde. It participates in antibiotic biosynthesis. Its function is as follows. Transaldolase involved in the biosynthesis of the capuramycin-type nucleoside antibiotic A-102395. Catalyzes the condensation of L-threonine and uridine-5'-aldehyde to form 5'-C-glycyluridine (GlyU). In Amycolatopsis sp, this protein is L-threonine:uridine-5'-aldehyde transaldolase.